A 97-amino-acid polypeptide reads, in one-letter code: Cystatin-A (97 aa).

N-acetylmethionine is present on methionine 1. The Secondary area of contact motif lies at 46 to 50 (QVVAG).

Belongs to the cystatin family.

The protein localises to the cytoplasm. This is an intracellular thiol proteinase inhibitor. The chain is Cystatin-A (Csta) from Mus musculus (Mouse).